The sequence spans 393 residues: Acetate kinase (393 aa).

Asn-10 serves as a coordination point for Mg(2+). Residue Lys-17 participates in ATP binding. Arg-89 lines the substrate pocket. Residue Asp-146 is the Proton donor/acceptor of the active site. Residues 204–208, 278–280, and 323–327 each bind ATP; these read HLGNG, DMR, and GVGEN. Glu-376 provides a ligand contact to Mg(2+).

It belongs to the acetokinase family. In terms of assembly, homodimer. Mg(2+) serves as cofactor. Mn(2+) is required as a cofactor.

It localises to the cytoplasm. It carries out the reaction acetate + ATP = acetyl phosphate + ADP. It functions in the pathway metabolic intermediate biosynthesis; acetyl-CoA biosynthesis; acetyl-CoA from acetate: step 1/2. Functionally, catalyzes the formation of acetyl phosphate from acetate and ATP. Can also catalyze the reverse reaction. This Mycoplasma genitalium (strain ATCC 33530 / DSM 19775 / NCTC 10195 / G37) (Mycoplasmoides genitalium) protein is Acetate kinase.